Here is a 275-residue protein sequence, read N- to C-terminus: Methylthioribulose-1-phosphate dehydratase (275 aa).

Residue Cys125 participates in substrate binding. Positions 143 and 145 each coordinate Zn(2+). The Proton donor/acceptor role is filled by Glu168. His233 serves as a coordination point for Zn(2+).

This sequence belongs to the aldolase class II family. MtnB subfamily. Zn(2+) serves as cofactor.

It is found in the cytoplasm. The catalysed reaction is 5-(methylsulfanyl)-D-ribulose 1-phosphate = 5-methylsulfanyl-2,3-dioxopentyl phosphate + H2O. It functions in the pathway amino-acid biosynthesis; L-methionine biosynthesis via salvage pathway; L-methionine from S-methyl-5-thio-alpha-D-ribose 1-phosphate: step 2/6. Its function is as follows. Catalyzes the dehydration of methylthioribulose-1-phosphate (MTRu-1-P) into 2,3-diketo-5-methylthiopentyl-1-phosphate (DK-MTP-1-P). The polypeptide is Methylthioribulose-1-phosphate dehydratase (Lodderomyces elongisporus (strain ATCC 11503 / CBS 2605 / JCM 1781 / NBRC 1676 / NRRL YB-4239) (Yeast)).